We begin with the raw amino-acid sequence, 283 residues long: 4-diphosphocytidyl-2-C-methyl-D-erythritol kinase (283 aa).

The active site involves Lys10. An ATP-binding site is contributed by 94–104; the sequence is PVAAGLAGGSS. Asp136 is an active-site residue.

Belongs to the GHMP kinase family. IspE subfamily.

It catalyses the reaction 4-CDP-2-C-methyl-D-erythritol + ATP = 4-CDP-2-C-methyl-D-erythritol 2-phosphate + ADP + H(+). It functions in the pathway isoprenoid biosynthesis; isopentenyl diphosphate biosynthesis via DXP pathway; isopentenyl diphosphate from 1-deoxy-D-xylulose 5-phosphate: step 3/6. Functionally, catalyzes the phosphorylation of the position 2 hydroxy group of 4-diphosphocytidyl-2C-methyl-D-erythritol. The chain is 4-diphosphocytidyl-2-C-methyl-D-erythritol kinase from Enterococcus faecalis (strain ATCC 700802 / V583).